A 361-amino-acid chain; its full sequence is Peptide chain release factor 1 (361 aa).

An N5-methylglutamine modification is found at Gln237. Positions 287 to 297 (KQQKEQSDTRK) are enriched in basic and acidic residues. The disordered stretch occupies residues 287–307 (KQQKEQSDTRKNLVGSGDRSE).

This sequence belongs to the prokaryotic/mitochondrial release factor family. In terms of processing, methylated by PrmC. Methylation increases the termination efficiency of RF1.

Its subcellular location is the cytoplasm. Peptide chain release factor 1 directs the termination of translation in response to the peptide chain termination codons UAG and UAA. This is Peptide chain release factor 1 from Francisella philomiragia subsp. philomiragia (strain ATCC 25017 / CCUG 19701 / FSC 153 / O#319-036).